The chain runs to 359 residues: 3-dehydroquinate synthase (359 aa).

NAD(+) contacts are provided by residues 70–75 (DAEGGK), 104–108 (GAATD), 128–129 (TT), Lys-141, and Lys-150. Residues Glu-183, His-246, and His-262 each coordinate Zn(2+).

Belongs to the sugar phosphate cyclases superfamily. Dehydroquinate synthase family. Requires Co(2+) as cofactor. It depends on Zn(2+) as a cofactor. NAD(+) is required as a cofactor.

The protein localises to the cytoplasm. It carries out the reaction 7-phospho-2-dehydro-3-deoxy-D-arabino-heptonate = 3-dehydroquinate + phosphate. Its pathway is metabolic intermediate biosynthesis; chorismate biosynthesis; chorismate from D-erythrose 4-phosphate and phosphoenolpyruvate: step 2/7. Its function is as follows. Catalyzes the conversion of 3-deoxy-D-arabino-heptulosonate 7-phosphate (DAHP) to dehydroquinate (DHQ). The protein is 3-dehydroquinate synthase of Mycolicibacterium gilvum (strain PYR-GCK) (Mycobacterium gilvum (strain PYR-GCK)).